A 380-amino-acid chain; its full sequence is S-adenosylmethionine:tRNA ribosyltransferase-isomerase (380 aa).

The segment covering 1-15 has biased composition (basic and acidic residues); the sequence is MHSKHPTDTARRCET. Residues 1–24 are disordered; the sequence is MHSKHPTDTARRCETGTDSSDTAA.

It belongs to the QueA family. In terms of assembly, monomer.

It localises to the cytoplasm. The enzyme catalyses 7-aminomethyl-7-carbaguanosine(34) in tRNA + S-adenosyl-L-methionine = epoxyqueuosine(34) in tRNA + adenine + L-methionine + 2 H(+). It functions in the pathway tRNA modification; tRNA-queuosine biosynthesis. Its function is as follows. Transfers and isomerizes the ribose moiety from AdoMet to the 7-aminomethyl group of 7-deazaguanine (preQ1-tRNA) to give epoxyqueuosine (oQ-tRNA). This is S-adenosylmethionine:tRNA ribosyltransferase-isomerase from Oleidesulfovibrio alaskensis (strain ATCC BAA-1058 / DSM 17464 / G20) (Desulfovibrio alaskensis).